Consider the following 86-residue polypeptide: Small ribosomal subunit protein bS20 (86 aa).

The interval 1–25 is disordered; sequence MANSASSRKRARQAVKRNKHNSQIR. Residues 7-25 are compositionally biased toward basic residues; sequence SRKRARQAVKRNKHNSQIR.

Belongs to the bacterial ribosomal protein bS20 family.

Functionally, binds directly to 16S ribosomal RNA. This Vesicomyosocius okutanii subsp. Calyptogena okutanii (strain HA) protein is Small ribosomal subunit protein bS20.